A 162-amino-acid polypeptide reads, in one-letter code: Large ribosomal subunit protein uL15 (162 aa).

Basic and acidic residues predominate over residues 1–18 (MKLNEIRDNEGATKDRMR). Residues 1-42 (MKLNEIRDNEGATKDRMRVGRGIGSGKGKTAGRGVKGQKART) are disordered. The segment covering 21-35 (RGIGSGKGKTAGRGV) has biased composition (gly residues).

Belongs to the universal ribosomal protein uL15 family. As to quaternary structure, part of the 50S ribosomal subunit.

Its function is as follows. Binds to the 23S rRNA. In Methylobacterium sp. (strain 4-46), this protein is Large ribosomal subunit protein uL15.